Reading from the N-terminus, the 176-residue chain is Large ribosomal subunit protein uL6 (176 aa).

The segment covering 151 to 170 has biased composition (basic and acidic residues); it reads RPPEPYKGKGVRYADEQVRR. A disordered region spans residues 151 to 176; sequence RPPEPYKGKGVRYADEQVRRKEAKKK.

Belongs to the universal ribosomal protein uL6 family. Part of the 50S ribosomal subunit.

This protein binds to the 23S rRNA, and is important in its secondary structure. It is located near the subunit interface in the base of the L7/L12 stalk, and near the tRNA binding site of the peptidyltransferase center. The chain is Large ribosomal subunit protein uL6 from Shewanella pealeana (strain ATCC 700345 / ANG-SQ1).